The sequence spans 309 residues: NADH-cytochrome b5 reductase 1 (309 aa).

Residues 29–49 form a helical membrane-spanning segment; that stretch reads EFVPYAVALTAVLAGFKLFTG. An FAD-binding FR-type domain is found at 60 to 165; that stretch reads TEFQEFVLKE…RGPKGAMVYT (106 aa). FAD-binding positions include 145–160 and 171–208; these read TTLK…GPKG and HIGM…KVDL.

Belongs to the flavoprotein pyridine nucleotide cytochrome reductase family. In terms of assembly, monomer. Component of the 2-(3-amino-3-carboxypropyl)histidine synthase complex composed of dph1, dph2, dph3 and a NADH-dependent reductase, predominantly cbr1. Requires FAD as cofactor.

The protein localises to the mitochondrion outer membrane. The catalysed reaction is 2 Fe(III)-[cytochrome b5] + NADH = 2 Fe(II)-[cytochrome b5] + NAD(+) + H(+). The enzyme catalyses 2 Fe(3+)-[Dph3] + NADH = 2 Fe(2+)-[Dph3] + NAD(+) + H(+). It participates in protein modification; peptidyl-diphthamide biosynthesis. Functionally, NADH-dependent reductase for dph3 and cytochrome b5. Required for the first step of diphthamide biosynthesis, a post-translational modification of histidine which occurs in elongation factor 2. Dph1 and dph2 transfer a 3-amino-3-carboxypropyl (ACP) group from S-adenosyl-L-methionine (SAM) to a histidine residue, the reaction is assisted by a reduction system comprising dph3 and a NADH-dependent reductase, predominantly cbr1. By reducing dph3, also involved in the formation of the tRNA wobble base modification mcm5s 2U (5-methoxycarbonylmethyl-2-thiouridine), mediated by the elongator complex. The cytochrome b5/NADH cytochrome b5 reductase electron transfer system supports the catalytic activity of several sterol biosynthetic enzymes. The chain is NADH-cytochrome b5 reductase 1 (cbr1) from Aspergillus clavatus (strain ATCC 1007 / CBS 513.65 / DSM 816 / NCTC 3887 / NRRL 1 / QM 1276 / 107).